Consider the following 1146-residue polypeptide: Nucleolar protein 6 (1146 aa).

Residues 1 to 48 are disordered; that stretch reads MGPAPAGEQLRGATGEPEVMEPALEGTGKEGKKASSRKRTLAEPPAKG. Position 56 is a phosphoserine (Ser-56). Residues 83-114 adopt a coiled-coil conformation; that stretch reads LLRLQVEELLKEVRLSEKKKDRIDAFLREVNQ. Phosphoserine is present on residues Ser-283, Ser-289, and Ser-811.

This sequence belongs to the NRAP family. In terms of assembly, part of the small subunit (SSU) processome, composed of more than 70 proteins and the RNA chaperone small nucleolar RNA (snoRNA) U3. Interacts with RRP7A; required for NOL6 localization to nucleolus.

It localises to the nucleus. The protein localises to the nucleolus. The protein resides in the chromosome. Functionally, part of the small subunit (SSU) processome, first precursor of the small eukaryotic ribosomal subunit. During the assembly of the SSU processome in the nucleolus, many ribosome biogenesis factors, an RNA chaperone and ribosomal proteins associate with the nascent pre-rRNA and work in concert to generate RNA folding, modifications, rearrangements and cleavage as well as targeted degradation of pre-ribosomal RNA by the RNA exosome. This is Nucleolar protein 6 from Homo sapiens (Human).